The chain runs to 542 residues: Ribonuclease Y (542 aa).

A helical membrane pass occupies residues 1 to 21; sequence MLIALIAVSVLAVAAIIGSLA. Residues 52–92 are disordered; it reads SRASQDLADSRKDVAKARAELESSRTRASDEARRADNADQA. Residues 59 to 92 show a composition bias toward basic and acidic residues; that stretch reads ADSRKDVAKARAELESSRTRASDEARRADNADQA. A KH domain is found at 229–289; the sequence is VVSVVPLPSN…MRREVARQAL (61 aa). The region spanning 355–449 is the HD domain; that stretch reads VLDHCVECAR…VKAADAISAA (95 aa).

Belongs to the RNase Y family.

It localises to the cell membrane. In terms of biological role, endoribonuclease that initiates mRNA decay. The sequence is that of Ribonuclease Y from Cutibacterium acnes (strain DSM 16379 / KPA171202) (Propionibacterium acnes).